The following is a 279-amino-acid chain: 5'-nucleotidase SurE 1 (279 aa).

4 residues coordinate a divalent metal cation: Asp12, Asp13, Ser45, and Asn103.

The protein belongs to the SurE nucleotidase family. It depends on a divalent metal cation as a cofactor.

The protein localises to the cytoplasm. The catalysed reaction is a ribonucleoside 5'-phosphate + H2O = a ribonucleoside + phosphate. In terms of biological role, nucleotidase that shows phosphatase activity on nucleoside 5'-monophosphates. In Chlamydia caviae (strain ATCC VR-813 / DSM 19441 / 03DC25 / GPIC) (Chlamydophila caviae), this protein is 5'-nucleotidase SurE 1.